A 1359-amino-acid chain; its full sequence is Nuclear protein STH1/NPS1 (1359 aa).

Phosphoserine is present on serine 38. In terms of domain architecture, HSA spans 307–383 (LERQQLLEKR…AKQRLAALKS (77 aa)). One can recognise a Helicase ATP-binding domain in the interval 482-647 (VSLYNNHLNG…WALLNFVLPK (166 aa)). 495-502 (DEMGLGKT) contacts ATP. A DEGH box motif is present at residues 597 to 600 (DEGH). Residues 795–956 (LLDRVLPKFK…NKSTAEEQEA (162 aa)) form the Helicase C-terminal domain. Positions 1090 to 1246 (RERRRLRQNG…TAAKKTKTKS (157 aa)) are disordered. Polar residues predominate over residues 1108–1126 (LENTPEASETSLIENNSFT). Basic residues-rich tracts occupy residues 1143–1154 (RSKRRSSRKKRT) and 1198–1210 (KKKK…KIKL). Positions 1219–1232 (NDGKRAEEKPESKS) are enriched in basic and acidic residues. The segment covering 1233–1246 (PAKKTAAKKTKTKS) has biased composition (basic residues). A Bromo domain is found at 1257 to 1357 (KLVEEMREQL…EFTDEWFKEH (101 aa)).

The protein belongs to the SNF2/RAD54 helicase family. In terms of assembly, interacts directly with SFH1, CSE4, histones H3, H4 and H2B, and via its N-terminus, with RSC8. Interacts with LDB7, NPL6 and RTT102. Component of the two forms of the RSC complex composed of at least either RSC1 or RSC2, and ARP7, ARP9, LDB7, NPL6, RSC3, RSC30, RSC4, RSC58, RSC6, RSC8, RSC9, SFH1, STH1, HTL1 and probably RTT102. The complexes interact with histone and histone variant components of centromeric chromatin.

It is found in the nucleus. It catalyses the reaction ATP + H2O = ADP + phosphate + H(+). Catalytic component of the chromatin structure-remodeling complex (RSC), which is involved in transcription regulation and nucleosome positioning. RSC is responsible for the transfer of a histone octamer from a nucleosome core particle to naked DNA. The reaction requires ATP and involves an activated RSC-nucleosome intermediate. Remodeling reaction also involves DNA translocation, DNA twist and conformational change. As a reconfigurer of centromeric and flanking nucleosomes, RSC complex is required both for proper kinetochore function in chromosome segregation and, via a PKC1-dependent signaling pathway, for organization of the cellular cytoskeleton. This subunit is the essential ATPase of the complex. It is a DNA translocase capable of nucleosome remodeling. Required for full expression of early meiotic genes. Essential for mitotic growth and repression of CHA1 expression. Also involved in G2 phase control. The protein is Nuclear protein STH1/NPS1 (STH1) of Saccharomyces cerevisiae (strain ATCC 204508 / S288c) (Baker's yeast).